The sequence spans 64 residues: Alpha-toxin Ts5 (64 aa).

The region spanning 2–64 (KDGYPVEGDN…KEPTKTSGRC (63 aa)) is the LCN-type CS-alpha/beta domain. Cystine bridges form between cysteine 12–cysteine 64, cysteine 16–cysteine 38, cysteine 24–cysteine 44, and cysteine 28–cysteine 46.

It belongs to the long (4 C-C) scorpion toxin superfamily. Sodium channel inhibitor family. Alpha subfamily. Expressed by the venom gland.

The protein localises to the secreted. Functionally, alpha toxins bind voltage-independently at site-3 of sodium channels (Nav) and inhibit the inactivation of the activated channels, thereby blocking neuronal transmission. By extending the depolarized period it indirectly affects beta-cell voltage-dependent potassium channels, thus increasing potassium permeability. The polypeptide is Alpha-toxin Ts5 (Tityus serrulatus (Brazilian scorpion)).